The primary structure comprises 77 residues: U9-lycotoxin-Ls1a (77 aa).

A signal peptide spans 1 to 20; that stretch reads MKLLLFTALVLVVIVSLIEA. A propeptide spanning residues 21 to 26 is cleaved from the precursor; sequence EAENER.

The protein belongs to the neurotoxin 19 (CSTX) family. 08 (U8-Lctx) subfamily. In terms of processing, contains 4 disulfide bonds. Expressed by the venom gland.

It localises to the secreted. The polypeptide is U9-lycotoxin-Ls1a (Lycosa singoriensis (Wolf spider)).